We begin with the raw amino-acid sequence, 711 residues long: Ribosomal RNA large subunit methyltransferase K/L (711 aa).

The THUMP domain maps to 42–153; that stretch reads DAQRAVLWSR…KGRATISVDL (112 aa).

The protein belongs to the methyltransferase superfamily. RlmKL family.

It is found in the cytoplasm. The catalysed reaction is guanosine(2445) in 23S rRNA + S-adenosyl-L-methionine = N(2)-methylguanosine(2445) in 23S rRNA + S-adenosyl-L-homocysteine + H(+). The enzyme catalyses guanosine(2069) in 23S rRNA + S-adenosyl-L-methionine = N(2)-methylguanosine(2069) in 23S rRNA + S-adenosyl-L-homocysteine + H(+). In terms of biological role, specifically methylates the guanine in position 2445 (m2G2445) and the guanine in position 2069 (m7G2069) of 23S rRNA. The polypeptide is Ribosomal RNA large subunit methyltransferase K/L (Xanthomonas campestris pv. campestris (strain 8004)).